A 430-amino-acid chain; its full sequence is Adenylosuccinate synthetase (430 aa).

GTP contacts are provided by residues 12-18 (GDEGKGK) and 40-42 (GHT). The Proton acceptor role is filled by Asp-13. The Mg(2+) site is built by Asp-13 and Gly-40. Residues 13-16 (DEGK), 38-41 (NAGH), Thr-128, Arg-142, Gln-223, Thr-238, and Arg-302 contribute to the IMP site. The active-site Proton donor is the His-41. A substrate-binding site is contributed by 298–304 (TTTGRPR). Residues Arg-304, 330-332 (SID), and 412-414 (SVG) contribute to the GTP site.

This sequence belongs to the adenylosuccinate synthetase family. In terms of assembly, homodimer. The cofactor is Mg(2+).

It localises to the cytoplasm. It catalyses the reaction IMP + L-aspartate + GTP = N(6)-(1,2-dicarboxyethyl)-AMP + GDP + phosphate + 2 H(+). Its pathway is purine metabolism; AMP biosynthesis via de novo pathway; AMP from IMP: step 1/2. Its function is as follows. Plays an important role in the de novo pathway of purine nucleotide biosynthesis. Catalyzes the first committed step in the biosynthesis of AMP from IMP. The protein is Adenylosuccinate synthetase of Bacillus licheniformis (strain ATCC 14580 / DSM 13 / JCM 2505 / CCUG 7422 / NBRC 12200 / NCIMB 9375 / NCTC 10341 / NRRL NRS-1264 / Gibson 46).